We begin with the raw amino-acid sequence, 372 residues long: tRNA pseudouridine synthase D (372 aa).

Catalysis depends on Asp-85, which acts as the Nucleophile. The 171-residue stretch at Gly-160 to Gly-330 folds into the TRUD domain.

Belongs to the pseudouridine synthase TruD family.

It carries out the reaction uridine(13) in tRNA = pseudouridine(13) in tRNA. Its function is as follows. Responsible for synthesis of pseudouridine from uracil-13 in transfer RNAs. This chain is tRNA pseudouridine synthase D, found in Campylobacter jejuni (strain RM1221).